The chain runs to 488 residues: 3-octaprenyl-4-hydroxybenzoate carboxy-lyase (488 aa).

Asparagine 172 provides a ligand contact to Mn(2+). Prenylated FMN-binding positions include 175–177, 189–191, and 194–195; these read IYR, RWL, and RG. Glutamate 238 is a binding site for Mn(2+). Aspartate 287 serves as the catalytic Proton donor.

It belongs to the UbiD family. As to quaternary structure, homohexamer. Requires prenylated FMN as cofactor. It depends on Mn(2+) as a cofactor.

It is found in the cell membrane. The enzyme catalyses a 4-hydroxy-3-(all-trans-polyprenyl)benzoate + H(+) = a 2-(all-trans-polyprenyl)phenol + CO2. Its pathway is cofactor biosynthesis; ubiquinone biosynthesis. Catalyzes the decarboxylation of 3-octaprenyl-4-hydroxy benzoate to 2-octaprenylphenol, an intermediate step in ubiquinone biosynthesis. The sequence is that of 3-octaprenyl-4-hydroxybenzoate carboxy-lyase from Shewanella oneidensis (strain ATCC 700550 / JCM 31522 / CIP 106686 / LMG 19005 / NCIMB 14063 / MR-1).